Consider the following 82-residue polypeptide: Three-finger toxin MicTx3 (82 aa).

A signal peptide spans 1 to 21; sequence MKTLLLTLVVVTIMCLDLGYT. Cystine bridges form between cysteine 24–cysteine 44, cysteine 38–cysteine 59, cysteine 63–cysteine 74, and cysteine 75–cysteine 80.

It belongs to the three-finger toxin family. Short-chain subfamily. As to expression, expressed by the venom gland.

It localises to the secreted. Its function is as follows. Has been described to inhibit nicotinic acetylcholine receptor (nAChR) alpha-7/CHRNA7 subunits and to bind acetylcholine binding protein (AChBP) (Kd=29.5 nM). This is Three-finger toxin MicTx3 from Micrurus corallinus (Brazilian coral snake).